The chain runs to 148 residues: Flavodoxin (148 aa).

Residues 4–145 form the Flavodoxin-like domain; the sequence is VLILFGSSTG…AVSAFAEDVL (142 aa).

This sequence belongs to the flavodoxin family. FMN serves as cofactor.

Functionally, low-potential electron donor to a number of redox enzymes. This chain is Flavodoxin, found in Desulfovibrio desulfuricans (strain ATCC 27774 / DSM 6949 / MB).